We begin with the raw amino-acid sequence, 60 residues long: Cytotoxin 1 (60 aa).

4 cysteine pairs are disulfide-bonded: cysteine 3-cysteine 21, cysteine 14-cysteine 38, cysteine 42-cysteine 53, and cysteine 54-cysteine 59.

It belongs to the three-finger toxin family. Short-chain subfamily. Type IA cytotoxin sub-subfamily. As to quaternary structure, monomer in solution; Homodimer and oligomer in the presence of negatively charged lipids forming a pore with a size ranging between 20 and 30 Angstroms. In terms of tissue distribution, expressed by the venom gland.

Its subcellular location is the secreted. The protein localises to the target cell membrane. Produces complete blockade of auricular contraction, which is irreversible at high concentrations. Induces apoptosis in leukemic cells. Possesses anti-arthritic and anti-inflammatory potential. The polypeptide is Cytotoxin 1 (Naja kaouthia (Monocled cobra)).